The sequence spans 385 residues: GTP cyclohydrolase-2 (385 aa).

Residues 1–189 (MYADAPSDSA…RDIADYRVHV (189 aa)) are DHBP synthase-like. The segment at 190 to 385 (VRTLRRVAEA…TKAERSGHMF (196 aa)) is GTP cyclohydrolase II. 240-244 (RLHSE) serves as a coordination point for GTP. 3 residues coordinate Zn(2+): Cys245, Cys256, and Cys258. Residues Gln261, 283-285 (EGR), and Thr305 contribute to the GTP site. Asp317 functions as the Proton acceptor in the catalytic mechanism. Arg319 (nucleophile) is an active-site residue. The GTP site is built by Thr340 and Lys345.

This sequence in the N-terminal section; belongs to the DHBP synthase family. It in the C-terminal section; belongs to the GTP cyclohydrolase II family. Requires Zn(2+) as cofactor.

The catalysed reaction is GTP + 4 H2O = 2,5-diamino-6-hydroxy-4-(5-phosphoribosylamino)-pyrimidine + formate + 2 phosphate + 3 H(+). The protein operates within cofactor biosynthesis; riboflavin biosynthesis; 5-amino-6-(D-ribitylamino)uracil from GTP: step 1/4. Its function is as follows. Catalyzes the conversion of GTP to 2,5-diamino-6-ribosylamino-4(3H)-pyrimidinone 5'-phosphate (DARP), formate and pyrophosphate. This Azospirillum brasilense protein is GTP cyclohydrolase-2 (ribA).